We begin with the raw amino-acid sequence, 151 residues long: UPF0208 membrane protein CKO_00500 (151 aa).

Transmembrane regions (helical) follow at residues 46–65 (YAIR…QIAL) and 69–91 (LGPA…WWLG).

It belongs to the UPF0208 family.

It localises to the cell inner membrane. This is UPF0208 membrane protein CKO_00500 from Citrobacter koseri (strain ATCC BAA-895 / CDC 4225-83 / SGSC4696).